We begin with the raw amino-acid sequence, 1341 residues long: WASH complex subunit 2A (1341 aa).

Residues 1–220 (MMNRTTPDQE…VGSDRGSIVD (220 aa)) form a sufficient for interaction with WASHC3, WASHC4 and WASHC5; required for interaction with WASHC1 region. Low complexity predominate over residues 202–214 (GELSSEEGSVGSD). Positions 202–405 (GELSSEEGSV…SSSKPGKKIP (204 aa)) are disordered. Residues 220-232 (DTEEEKEEEESDE) are compositionally biased toward acidic residues. A compositionally biased stretch (basic and acidic residues) spans 233–244 (DFAHHSDNEQNR). Acidic residues-rich tracts occupy residues 250 to 259 (SDEEEDDDGC) and 266 to 276 (EKEEEDIEDIE). A compositionally biased stretch (basic and acidic residues) spans 293 to 307 (LAARIKGDAVGRVDE). A compositionally biased stretch (gly residues) spans 355–366 (GSGGGLFSGGKG). The interval 356-600 (SGGGLFSGGK…QTLCLQAQRE (245 aa)) is sufficient for interaction with CCDC93. Residues 356 to 742 (SGGGLFSGGK…KEAQLGVKSV (387 aa)) are required for interaction with CCDC22 and VPS35L. The interaction with VPS35 stretch occupies residues 357–1341 (GGGLFSGGKG…DDPLNAFGGQ (985 aa)). Short sequence motifs (LFa) lie at residues 367–378 (LFDDEDEESDLF), 411–419 (VFLGDTDVF), 450–463 (LFDDDDGDDDDDFF), and 482–491 (IFGDEEGDLF). The tract at residues 422-554 (ASVPSMKEPQ…EDLFSSQSAS (133 aa)) is disordered. A compositionally biased stretch (acidic residues) spans 451-462 (FDDDDGDDDDDF). Residues 507–517 (DENKARAEKKV) show a composition bias toward basic and acidic residues. Residues 518–536 (TLSSSKNLKPSSETKTQKG) are compositionally biased toward polar residues. 3 consecutive short sequence motifs (LFa) follow at residues 537 to 548 (LFSDEEDSEDLF), 572 to 583 (LFDDEDEEDNLF), and 617 to 629 (LFSSDEEDQWNIP). Ser539 carries the post-translational modification Phosphoserine. 3 disordered regions span residues 621–664 (DEED…KTSL), 696–739 (DSGG…QLGV), and 751–838 (ESLK…KSTG). Residues 637-647 (SDSRSKGEPRD) show a composition bias toward basic and acidic residues. Short sequence motifs (LFa) lie at residues 664 to 674 (LFEEDEEDDLF), 690 to 702 (LFEDDVDSGGSLF), and 726 to 738 (LFSDEEEKEAQLG). The segment covering 751–768 (ESLKFGRTDVAESEKEGL) has biased composition (basic and acidic residues). Positions 803-817 (LFDEEEDKMEDQNII) match the LFa 11 motif. Positions 823 to 834 (EVGKGRDPDAHP) are enriched in basic and acidic residues. 3 short sequence motifs (LFa) span residues 839–847 (VFQDEELLF), 856–862 (DPDVDLF), and 878–888 (LFGDDEDDDLF). 2 disordered regions span residues 881–951 (DDED…KEPS) and 988–1205 (FPSS…LEDE). Basic and acidic residues-rich tracts occupy residues 898-911 (QEKKRVVKKDHSVD) and 917-931 (KHPESIQGSKEKGIW). The interval 937 to 1341 (QDSSGLAPFK…DDPLNAFGGQ (405 aa)) is interaction with phospholipids. The span at 1028 to 1046 (NKSRVKMRGKRRPQTRAAR) shows a compositional bias: basic residues. A required for interaction with F-actin-capping protein subunit alpha (CAPZA1 or CAPZA2 or CAPZA3) region spans residues 1029 to 1047 (KSRVKMRGKRRPQTRAARR). Residues Ser1054 and Ser1087 each carry the phosphoserine modification. Residues 1094–1110 (EALAAAAAPWEGGPVPG) show a composition bias toward low complexity. At Ser1114 the chain carries Phosphoserine. 6 consecutive short sequence motifs (LFa) follow at residues 1129-1136 (LFDSGDIF), 1171-1185 (MFPALGEASSDDDLF), 1201-1209 (LLEDEDDLF), 1234-1240 (IFEDDIF), 1262-1270 (LFDDNIDIF), and 1290-1299 (IFDDDMDDIF). Residues 1135–1145 (IFSTGTGSQSV) are compositionally biased toward polar residues. Positions 1302–1326 (GIQAKTTKPKSRSAQAAPEPRFEHK) are disordered. The short motif at 1330–1338 (IFDDPLNAF) is the LFa 21 element.

The protein belongs to the FAM21 family. In terms of assembly, component of the WASH core complex also described as WASH regulatory complex (SHRC) composed of WASH (WASHC1, WASH2P or WASH3P), WASHC2 (WASHC2A or WASHC2C), WASHC3, WASHC4 and WASHC5; in the complex interacts (via N-terminus) directly with WASHC1. The WASH core complex associates with the F-actin-capping protein dimer (formed by CAPZA1, CAPZA2 or CAPZA3 and CAPZB) in a transient or substoichiometric manner which was initially described as WASH complex. Interacts with VPS35; mediates the association with the retromer CSC complex. Interacts with FKBP15. Interacts with CCDC93, CCDC22, VPS35L; indicative for an association of the WASH core complex with the CCC and retriever complexes. Directly interacts with TBC1D23.

It localises to the early endosome membrane. The protein localises to the cell membrane. Acts at least in part as component of the WASH core complex whose assembly at the surface of endosomes inhibits WASH nucleation-promoting factor (NPF) activity in recruiting and activating the Arp2/3 complex to induce actin polymerization and is involved in the fission of tubules that serve as transport intermediates during endosome sorting. Mediates the recruitment of the WASH core complex to endosome membranes via binding to phospholipids and VPS35 of the retromer CSC. Mediates the recruitment of the F-actin-capping protein dimer to the WASH core complex probably promoting localized F-actin polymerization needed for vesicle scission. Via its C-terminus binds various phospholipids, most strongly phosphatidylinositol 4-phosphate (PtdIns-(4)P), phosphatidylinositol 5-phosphate (PtdIns-(5)P) and phosphatidylinositol 3,5-bisphosphate (PtdIns-(3,5)P2). Involved in the endosome-to-plasma membrane trafficking and recycling of SNX27-retromer-dependent cargo proteins, such as GLUT1. Required for the association of DNAJC13, ENTR1, ANKRD50 with retromer CSC subunit VPS35. Required for the endosomal recruitment of CCC complex subunits COMMD1 and CCDC93 as well as the retriever complex subunit VPS35L. The sequence is that of WASH complex subunit 2A from Homo sapiens (Human).